The primary structure comprises 73 residues: Protein DSS1 HOMOLOG ON CHROMOSOME V (73 aa).

It belongs to the DSS1/SEM1 family. In terms of assembly, part of the 26S proteasome. Interacts with BRCA2B. Interacts with EER5. Interacts with UCH1 and UCH2.

Functionally, subunit of the 26S proteasome which plays a role in ubiquitin-dependent proteolysis. Also associates with the TREX-2 complex that is required for transcription-coupled mRNA export. This Arabidopsis thaliana (Mouse-ear cress) protein is Protein DSS1 HOMOLOG ON CHROMOSOME V.